The sequence spans 364 residues: MQERHTEQDYRALLIADTPIIDVRAPIEFEQGAMPAAINLPLMNNDERAAVGICYKQQGSDAALALGHKLVAGEIRQQRMDAWRAACLQNPHGILCCARGGQRSHIVQRWLHDAGIDYPLVEGGYKALRQTAIQATIELSQKPIVLIGGCTGCGKTLLVQQQPNGVDLEGLARHRGSAFGRTLQPQLSQASFENLLAAEMLKTDARQNLRLWVLEDESRMIGSNHLPECLRERMTQATIAVVEDPFEIRLERLNEEYFLRMHHDFTHAYGDEQGWQEYCEYLHHGLSAIKRRLGLQRYNELAARLDAALTTQLTTGSTDGHLAWLVPLLEEYYDPMYRYQLEKKAEKVVFRGEWAEVAEWVKAQ.

The Rhodanese domain occupies 14 to 137; that stretch reads LIADTPIIDV…LRQTAIQATI (124 aa). C97 acts as the S-selanylcysteine intermediate in catalysis.

This sequence belongs to the SelU family. In terms of assembly, monomer.

It carries out the reaction 5-methylaminomethyl-2-thiouridine(34) in tRNA + selenophosphate + (2E)-geranyl diphosphate + H2O + H(+) = 5-methylaminomethyl-2-selenouridine(34) in tRNA + (2E)-thiogeraniol + phosphate + diphosphate. It catalyses the reaction 5-methylaminomethyl-2-thiouridine(34) in tRNA + (2E)-geranyl diphosphate = 5-methylaminomethyl-S-(2E)-geranyl-thiouridine(34) in tRNA + diphosphate. The catalysed reaction is 5-methylaminomethyl-S-(2E)-geranyl-thiouridine(34) in tRNA + selenophosphate + H(+) = 5-methylaminomethyl-2-(Se-phospho)selenouridine(34) in tRNA + (2E)-thiogeraniol. The enzyme catalyses 5-methylaminomethyl-2-(Se-phospho)selenouridine(34) in tRNA + H2O = 5-methylaminomethyl-2-selenouridine(34) in tRNA + phosphate. Its function is as follows. Involved in the post-transcriptional modification of the uridine at the wobble position (U34) of tRNA(Lys), tRNA(Glu) and tRNA(Gln). Catalyzes the conversion of 2-thiouridine (S2U-RNA) to 2-selenouridine (Se2U-RNA). Acts in a two-step process involving geranylation of 2-thiouridine (S2U) to S-geranyl-2-thiouridine (geS2U) and subsequent selenation of the latter derivative to 2-selenouridine (Se2U) in the tRNA chain. This Escherichia coli O45:K1 (strain S88 / ExPEC) protein is tRNA 2-selenouridine synthase.